The primary structure comprises 238 residues: Ubiquinone biosynthesis O-methyltransferase (238 aa).

Positions 39, 58, 79, and 123 each coordinate S-adenosyl-L-methionine.

The protein belongs to the methyltransferase superfamily. UbiG/COQ3 family.

The enzyme catalyses a 3-demethylubiquinol + S-adenosyl-L-methionine = a ubiquinol + S-adenosyl-L-homocysteine + H(+). The catalysed reaction is a 3-(all-trans-polyprenyl)benzene-1,2-diol + S-adenosyl-L-methionine = a 2-methoxy-6-(all-trans-polyprenyl)phenol + S-adenosyl-L-homocysteine + H(+). It participates in cofactor biosynthesis; ubiquinone biosynthesis. Its function is as follows. O-methyltransferase that catalyzes the 2 O-methylation steps in the ubiquinone biosynthetic pathway. The chain is Ubiquinone biosynthesis O-methyltransferase from Hahella chejuensis (strain KCTC 2396).